Here is a 217-residue protein sequence, read N- to C-terminus: Ras-related protein Rab11B (217 aa).

Glycine 21–serine 28 serves as a coordination point for GTP. The Effector region motif lies at serine 43 to phenylalanine 51. GTP is bound by residues aspartate 69 to glutamine 73 and asparagine 127 to aspartate 130. Residues cysteine 214 and cysteine 215 are each lipidated (S-geranylgeranyl cysteine).

It belongs to the small GTPase superfamily. Rab family.

Its subcellular location is the cell membrane. This chain is Ras-related protein Rab11B (RAB11B), found in Nicotiana tabacum (Common tobacco).